The chain runs to 408 residues: NADH-quinone oxidoreductase subunit D (408 aa).

The protein belongs to the complex I 49 kDa subunit family. As to quaternary structure, NDH-1 is composed of 14 different subunits. Subunits NuoB, C, D, E, F, and G constitute the peripheral sector of the complex.

The protein localises to the cell inner membrane. It catalyses the reaction a quinone + NADH + 5 H(+)(in) = a quinol + NAD(+) + 4 H(+)(out). NDH-1 shuttles electrons from NADH, via FMN and iron-sulfur (Fe-S) centers, to quinones in the respiratory chain. The immediate electron acceptor for the enzyme in this species is believed to be ubiquinone. Couples the redox reaction to proton translocation (for every two electrons transferred, four hydrogen ions are translocated across the cytoplasmic membrane), and thus conserves the redox energy in a proton gradient. The sequence is that of NADH-quinone oxidoreductase subunit D from Campylobacter hominis (strain ATCC BAA-381 / DSM 21671 / CCUG 45161 / LMG 19568 / NCTC 13146 / CH001A).